Consider the following 198-residue polypeptide: Guanylyl cyclase-activating protein 2 (198 aa).

A lipid anchor (N-myristoyl glycine) is attached at glycine 2. EF-hand domains are found at residues 16 to 51 (DVAE…QDNH), 52 to 87 (EAAE…VLRG), 88 to 123 (KLEH…IYKL), and 139 to 174 (TPEE…DKWV). Residues aspartate 65, asparagine 67, aspartate 69, threonine 71, glutamate 76, aspartate 101, aspartate 103, asparagine 105, cysteine 107, glutamate 112, aspartate 152, asparagine 154, aspartate 156, glutamine 158, and glutamate 163 each contribute to the Ca(2+) site.

In terms of assembly, undergoes dimerization at low calcium ions concentration, while the presence of calcium ions inhibits its dimerization. Dimerization correlates with its ability to activate GC. In terms of tissue distribution, retina and pineal gland.

Functionally, stimulates synthesis of cGMP in photoreceptors. Thought to mediate Ca(2+)-sensitive regulation of retinal guanylyl cyclase (GC), a key event in recovery of the dark state of rod photoreceptors following light exposure. The polypeptide is Guanylyl cyclase-activating protein 2 (GUCA1B) (Gallus gallus (Chicken)).